We begin with the raw amino-acid sequence, 183 residues long: MKLIVGLGNPGFEYEHTRHNIGFKIIDKLLDVLNLELNKSQFNGLYVKHDDFIIAKPLTYMNLSGNFIRQLVNFYKIQIDDILVIHDELAFNLGVVRLKQNGSANGQKGVANIISQLGTQNFKRLRVGIKNEDLKNIASFVLSKFAPNELILLESAIASASVIAYDFLKSNKSFSKLMNEYNQ.

Y14 is a binding site for tRNA. Residue H19 is the Proton acceptor of the active site. Residues Y60 and N62 each coordinate tRNA.

This sequence belongs to the PTH family. As to quaternary structure, monomer.

It is found in the cytoplasm. It catalyses the reaction an N-acyl-L-alpha-aminoacyl-tRNA + H2O = an N-acyl-L-amino acid + a tRNA + H(+). Functionally, hydrolyzes ribosome-free peptidyl-tRNAs (with 1 or more amino acids incorporated), which drop off the ribosome during protein synthesis, or as a result of ribosome stalling. Catalyzes the release of premature peptidyl moieties from peptidyl-tRNA molecules trapped in stalled 50S ribosomal subunits, and thus maintains levels of free tRNAs and 50S ribosomes. The chain is Peptidyl-tRNA hydrolase from Mycoplasmoides gallisepticum (strain R(low / passage 15 / clone 2)) (Mycoplasma gallisepticum).